A 579-amino-acid polypeptide reads, in one-letter code: Tetratricopeptide repeat protein 39C (579 aa).

The span at 182–197 (QQGALASDQANHNTST) shows a compositional bias: polar residues. Positions 182–202 (QQGALASDQANHNTSTGSGGR) are disordered. TPR repeat units follow at residues 311-344 (SLFI…ASDQ), 349-382 (HVCL…SRWS), and 481-514 (GLKH…EYGR).

The protein belongs to the TTC39 family.

The protein is Tetratricopeptide repeat protein 39C (ttc39c) of Danio rerio (Zebrafish).